We begin with the raw amino-acid sequence, 251 residues long: Ubiquinone/menaquinone biosynthesis C-methyltransferase UbiE (251 aa).

S-adenosyl-L-methionine-binding positions include T74, D95, and 123–124; that span reads NA.

It belongs to the class I-like SAM-binding methyltransferase superfamily. MenG/UbiE family.

The catalysed reaction is a 2-demethylmenaquinol + S-adenosyl-L-methionine = a menaquinol + S-adenosyl-L-homocysteine + H(+). The enzyme catalyses a 2-methoxy-6-(all-trans-polyprenyl)benzene-1,4-diol + S-adenosyl-L-methionine = a 5-methoxy-2-methyl-3-(all-trans-polyprenyl)benzene-1,4-diol + S-adenosyl-L-homocysteine + H(+). It participates in quinol/quinone metabolism; menaquinone biosynthesis; menaquinol from 1,4-dihydroxy-2-naphthoate: step 2/2. The protein operates within cofactor biosynthesis; ubiquinone biosynthesis. Its function is as follows. Methyltransferase required for the conversion of demethylmenaquinol (DMKH2) to menaquinol (MKH2) and the conversion of 2-polyprenyl-6-methoxy-1,4-benzoquinol (DDMQH2) to 2-polyprenyl-3-methyl-6-methoxy-1,4-benzoquinol (DMQH2). In Psychromonas ingrahamii (strain DSM 17664 / CCUG 51855 / 37), this protein is Ubiquinone/menaquinone biosynthesis C-methyltransferase UbiE.